Consider the following 276-residue polypeptide: MGYVTTKDGVDIFYKDWGPRDAPVIFFHHGWPLSSDDWDAQMLFFLKEGFRVVAHDRRGHGRSTQVWDGHDMDHYADDVAAVVEYLGVQGAVHVGHSTGGGEVAYYVARYPNDPVAKAVLISAVPPLMVKTESNPDGLPKEVFDDLQNQLFKNRSQFYHDVPAGPFYGFNRPGAKVSEPVVLNWWRQGMMGGAKAHYDGIVAFSQTDFTEALKKIEVPVLILHGEDDQVVPFEISGKKSAELVKNGKLISYPGFPHGMPTTEAETINKDLLAFIRS.

The AB hydrolase-1 domain occupies 23-254; that stretch reads PVIFFHHGWP…NGKLISYPGF (232 aa). Residues Ser97, Asp227, and His256 contribute to the active site.

The protein belongs to the AB hydrolase superfamily. Bacterial non-heme haloperoxidase / perhydrolase family. In terms of assembly, homodimer.

The catalysed reaction is 3,4-dihydrocoumarin + H2O = 3-(2-hydroxyphenyl)propanoate + H(+). It carries out the reaction peracetic acid + H2O = acetate + H2O2 + H(+). The enzyme catalyses a percarboxylic acid + H2O = a carboxylate + H2O2 + H(+). Its activity is regulated as follows. Inhibited by the serine protease inhibitors diisopropyl fluorophosphate and phenylmethanesulfonyl fluoride. Multifunctional enzyme, which shows esterase and perhydrolase activities, and is capable of organic acid-assisted bromination of organic compounds. Catalyzes the hydrolysis of 3,4-dihydrocoumarin. Aromatic lactones other than 3,4-dihydrocoumarin, such as 2-coumaranone and homogentisic acid lactone, are also substrates, but their activities relative to that of 3,4-dihydrocoumarin are quite low. Also catalyzes the hydrolysis of several linear esters, with specificity toward methyl esters. In addition, shows perhydrolase activity and catalyzes the dose- and time-dependent degradation of peracetic acid, a broad-spectrum biocide, to acetic acid and hydrogen peroxide. It suggests that in vivo DCH may play a role in the oxidative stress defense system and detoxify peroxoacids in conjunction with the catalase, i.e. peroxoacids are first hydrolyzed to the corresponding acids and hydrogen peroxide by DCH, and then the resulting hydrogen peroxide is degraded by the catalase. Also shows organic acid-assisted bromination activity toward monochlorodimedon when incubated with hydrogen peroxide and dihydrocoumarin or an organic acid, such as acetate and n-butyrate. In Acinetobacter calcoaceticus, this protein is Bifunctional esterase/perhydrolase DCH.